A 232-amino-acid polypeptide reads, in one-letter code: uncharacterized protein (232 aa).

The protein resides in the cytoplasm. It is found in the nucleus. This is an uncharacterized protein from Saccharomyces cerevisiae (strain ATCC 204508 / S288c) (Baker's yeast).